An 878-amino-acid chain; its full sequence is Alanine--tRNA ligase (878 aa).

Positions 565, 569, 667, and 671 each coordinate Zn(2+).

It belongs to the class-II aminoacyl-tRNA synthetase family. Requires Zn(2+) as cofactor.

It is found in the cytoplasm. It carries out the reaction tRNA(Ala) + L-alanine + ATP = L-alanyl-tRNA(Ala) + AMP + diphosphate. Catalyzes the attachment of alanine to tRNA(Ala) in a two-step reaction: alanine is first activated by ATP to form Ala-AMP and then transferred to the acceptor end of tRNA(Ala). Also edits incorrectly charged Ser-tRNA(Ala) and Gly-tRNA(Ala) via its editing domain. In Desulforamulus reducens (strain ATCC BAA-1160 / DSM 100696 / MI-1) (Desulfotomaculum reducens), this protein is Alanine--tRNA ligase.